A 185-amino-acid chain; its full sequence is Ribosome-recycling factor (185 aa).

It belongs to the RRF family.

The protein resides in the cytoplasm. Its function is as follows. Responsible for the release of ribosomes from messenger RNA at the termination of protein biosynthesis. May increase the efficiency of translation by recycling ribosomes from one round of translation to another. The polypeptide is Ribosome-recycling factor (Glaesserella parasuis serovar 5 (strain SH0165) (Haemophilus parasuis)).